We begin with the raw amino-acid sequence, 272 residues long: Protein FAM210A (272 aa).

Residues 117–229 (DKSISLYQRF…GYMSTPPPVK (113 aa)) form the DUF1279 domain. A helical membrane pass occupies residues 136 to 156 (VLIPVHLITSGVWFGTFYYAA). A coiled-coil region spans residues 229 to 271 (KEYLQDRMEETKELITEKMEETKDRLTEKLQETKEKVSFKKKV). The interval 246 to 272 (KMEETKDRLTEKLQETKEKVSFKKKVE) is disordered.

Belongs to the FAM210 family. As to quaternary structure, interacts with ATAD3A.

The protein localises to the membrane. The protein resides in the mitochondrion. It is found in the cytoplasm. Its function is as follows. May play a role in the structure and strength of both muscle and bone. The polypeptide is Protein FAM210A (FAM210A) (Homo sapiens (Human)).